A 357-amino-acid polypeptide reads, in one-letter code: DNA replication and repair protein RecF (357 aa).

Residue 30 to 37 coordinates ATP; it reads GANGSGKT.

Belongs to the RecF family.

The protein localises to the cytoplasm. Functionally, the RecF protein is involved in DNA metabolism; it is required for DNA replication and normal SOS inducibility. RecF binds preferentially to single-stranded, linear DNA. It also seems to bind ATP. In Salmonella paratyphi A (strain ATCC 9150 / SARB42), this protein is DNA replication and repair protein RecF.